Here is a 477-residue protein sequence, read N- to C-terminus: Bifunctional protein HldE (477 aa).

The segment at 1-318 is ribokinase; sequence MKVTLPEFER…ENAVRGRADT (318 aa). Residue Lys179 is modified to N6-acetyllysine. 195-198 contributes to the ATP binding site; it reads NLSE. Residue Asp264 is part of the active site. Residues 344–477 are cytidylyltransferase; it reads MTNGVFDILH…IKKIQQDKKG (134 aa).

It in the N-terminal section; belongs to the carbohydrate kinase PfkB family. The protein in the C-terminal section; belongs to the cytidylyltransferase family. In terms of assembly, homodimer.

The catalysed reaction is D-glycero-beta-D-manno-heptose 7-phosphate + ATP = D-glycero-beta-D-manno-heptose 1,7-bisphosphate + ADP + H(+). The enzyme catalyses D-glycero-beta-D-manno-heptose 1-phosphate + ATP + H(+) = ADP-D-glycero-beta-D-manno-heptose + diphosphate. It participates in nucleotide-sugar biosynthesis; ADP-L-glycero-beta-D-manno-heptose biosynthesis; ADP-L-glycero-beta-D-manno-heptose from D-glycero-beta-D-manno-heptose 7-phosphate: step 1/4. The protein operates within nucleotide-sugar biosynthesis; ADP-L-glycero-beta-D-manno-heptose biosynthesis; ADP-L-glycero-beta-D-manno-heptose from D-glycero-beta-D-manno-heptose 7-phosphate: step 3/4. It functions in the pathway bacterial outer membrane biogenesis; LPS core biosynthesis. Its function is as follows. Catalyzes the phosphorylation of D-glycero-D-manno-heptose 7-phosphate at the C-1 position to selectively form D-glycero-beta-D-manno-heptose-1,7-bisphosphate. Functionally, catalyzes the ADP transfer from ATP to D-glycero-beta-D-manno-heptose 1-phosphate, yielding ADP-D-glycero-beta-D-manno-heptose. The polypeptide is Bifunctional protein HldE (Shigella flexneri).